The sequence spans 115 residues: Potassium-transporting ATPase potassium-binding subunit (115 aa).

2 helical membrane-spanning segments follow: residues 8-28 (YFLLLIVIAVPLGKYLYVAFF) and 60-80 (SYCTALLIVNAALLGISYGLL).

Belongs to the KdpA family. The system is composed of three essential subunits: KdpA, KdpB and KdpC.

The protein localises to the cell membrane. Its function is as follows. Part of the high-affinity ATP-driven potassium transport (or Kdp) system, which catalyzes the hydrolysis of ATP coupled with the electrogenic transport of potassium into the cytoplasm. This subunit binds the extracellular potassium ions and delivers the ions to the membrane domain of KdpB through an intramembrane tunnel. The sequence is that of Potassium-transporting ATPase potassium-binding subunit from Geobacillus stearothermophilus (Bacillus stearothermophilus).